We begin with the raw amino-acid sequence, 417 residues long: Lysosome-associated membrane glycoprotein 1 (417 aa).

Positions 1–28 (MAAPGSARRPLLLLLLLLLLGLMHCASA) are cleaved as a signal peptide. Residues 29–194 (AMFMVKNGNG…SRGETRCEQD (166 aa)) form a first lumenal domain region. The Lumenal portion of the chain corresponds to 29 to 382 (AMFMVKNGNG…EECLLDENSM (354 aa)). N37 and N45 each carry an N-linked (GlcNAc...) asparagine glycan. An intrachain disulfide couples C41 to C80. A glycan (N-linked (GlcNAc...) (polylactosaminoglycan) asparagine) is linked at N62. 4 N-linked (GlcNAc...) asparagine glycosylation sites follow: N76, N84, N103, and N107. Residues N121 and N130 are each glycosylated (N-linked (GlcNAc...) (polylactosaminoglycan) asparagine). Residues C155 and C191 are joined by a disulfide bond. N-linked (GlcNAc...) asparagine glycosylation is found at N165 and N181. Positions 184 to 221 (FSRGETRCEQDRPSPTTAPPAPPSPSPSPVPKSPSVDK) are disordered. A hinge region spans residues 195–227 (RPSPTTAPPAPPSPSPSPVPKSPSVDKYNVSGT). O-linked (GalNAc...) serine; partial glycosylation occurs at S197. Residues T199 and T200 are each glycosylated (O-linked (GalNAc...) threonine). A compositionally biased stretch (pro residues) spans 199–215 (TTAPPAPPSPSPSPVPK). 3 O-linked (GalNAc...) serine glycosylation sites follow: S207, S209, and S211. 2 N-linked (GlcNAc...) (polylactosaminoglycan) asparagine glycosylation sites follow: N223 and N228. The second lumenal domain stretch occupies residues 228 to 382 (NGTCLLASMG…EECLLDENSM (155 aa)). C231 and C269 are oxidised to a cystine. N-linked (GlcNAc...) asparagine glycans are attached at residues N241, N249, N261, N293, and N322. C338 and C375 form a disulfide bridge. Residues 383 to 410 (LIPIAVGGALAGLVLIVLIAYLVGRKRS) traverse the membrane as a helical segment. The Cytoplasmic segment spans residues 411 to 417 (HAGYQTI).

It belongs to the LAMP family. Interacts with ABCB9; this interaction strongly stabilizes ABCB9 and protects ABCB9 against lysosomal degradation. Interacts with FURIN. Interacts with TMEM175; inhibiting the proton channel activity of TMEM175. As to quaternary structure, (Microbial infection) Interacts with Lassa virus protein glycoprotein. In terms of assembly, (Microbial infection) Interacts with mumps virus protein F; this interaction promotes protein F cleavage by FURIN. Post-translationally, O- and N-glycosylated; some of the 18 N-linked glycans are polylactosaminoglycans. (Microbial infection) The glycosylation of Asn-76 is essential for Lassa virus entry into cells.

The protein localises to the lysosome membrane. It is found in the endosome membrane. It localises to the late endosome membrane. The protein resides in the cell membrane. Its subcellular location is the cytolytic granule membrane. Lysosomal membrane glycoprotein which plays an important role in lysosome biogenesis, lysosomal pH regulation, autophagy and cholesterol homeostasis. Acts as an important regulator of lysosomal lumen pH regulation by acting as a direct inhibitor of the proton channel TMEM175, facilitating lysosomal acidification for optimal hydrolase activity. Also plays an important role in NK-cells cytotoxicity. Mechanistically, participates in cytotoxic granule movement to the cell surface and perforin trafficking to the lytic granule. In addition, protects NK-cells from degranulation-associated damage induced by their own cytotoxic granule content. Presents carbohydrate ligands to selectins. In terms of biological role, (Microbial infection) Acts as a receptor for Lassa virus glycoprotein. Also promotes fusion of the virus with host membrane in less acidic endosomes. Functionally, (Microbial infection) Supports the FURIN-mediated cleavage of mumps virus fusion protein F by interacting with both FURIN and the unprocessed form but not the processed form of the viral protein F. In Homo sapiens (Human), this protein is Lysosome-associated membrane glycoprotein 1.